The sequence spans 867 residues: Probable beta-glucosidase A (867 aa).

A signal peptide spans 1 to 18 (MRFSWLEVAVTAASLANA). N67, N218, and N259 each carry an N-linked (GlcNAc...) asparagine glycan. D287 is a catalytic residue. N-linked (GlcNAc...) asparagine glycosylation is found at N322, N329, N361, N449, N530, N549, N571, N675, and N719.

Belongs to the glycosyl hydrolase 3 family.

It is found in the secreted. The catalysed reaction is Hydrolysis of terminal, non-reducing beta-D-glucosyl residues with release of beta-D-glucose.. It functions in the pathway glycan metabolism; cellulose degradation. In terms of biological role, beta-glucosidases are one of a number of cellulolytic enzymes involved in the degradation of cellulosic biomass. Catalyzes the last step releasing glucose from the inhibitory cellobiose. The polypeptide is Probable beta-glucosidase A (bglA) (Aspergillus clavatus (strain ATCC 1007 / CBS 513.65 / DSM 816 / NCTC 3887 / NRRL 1 / QM 1276 / 107)).